A 173-amino-acid chain; its full sequence is Co-chaperone protein HscB homolog (173 aa).

Positions Cys-5–Met-77 constitute a J domain.

The protein belongs to the HscB family. In terms of assembly, interacts with HscA and stimulates its ATPase activity.

Its function is as follows. Co-chaperone involved in the maturation of iron-sulfur cluster-containing proteins. Seems to help targeting proteins to be folded toward HscA. This chain is Co-chaperone protein HscB homolog, found in Pseudomonas syringae pv. tomato (strain ATCC BAA-871 / DC3000).